Reading from the N-terminus, the 1172-residue chain is Ras guanine nucleotide exchange factor W (1172 aa).

2 stretches are compositionally biased toward low complexity: residues 34-70 and 78-87; these read PIYT…LNNL and NSNSVNNTIS. 3 disordered regions span residues 34-100, 138-162, and 186-246; these read PIYT…RSNT, KFLD…RIQQ, and FKRS…EIKD. The segment covering 194–241 has biased composition (low complexity); sequence QPPQSQSQQQQQLQLQQQQQQSMPNLSLGNNINSNNNNNNGSENNDIS. Helical transmembrane passes span 286 to 306, 320 to 340, 347 to 367, 378 to 400, 432 to 452, and 545 to 565; these read IWLT…DIIG, IMAV…LNLF, FPGT…VTDI, VLSI…ISLI, LTTN…QLLV, and ILHL…NLLI. The stretch at 666–702 forms a coiled coil; the sequence is LLGMLNEIDDSLQAAKEKVEEESIQNSILKKDIEDLY. The 139-residue stretch at 765-903 folds into the N-terminal Ras-GEF domain; sequence DLNVIQYATI…YIDSIHKRKM (139 aa). The Ras-GEF domain maps to 938-1170; that stretch reads DISDIAIQIT…WKMSLSCEQR (233 aa).

It localises to the membrane. Functionally, promotes the exchange of Ras-bound GDP by GTP. The sequence is that of Ras guanine nucleotide exchange factor W (gefW) from Dictyostelium discoideum (Social amoeba).